Here is a 530-residue protein sequence, read N- to C-terminus: Protein SLOW WALKER 1 (530 aa).

7 WD repeats span residues 50-89, 91-130, 133-173, 176-216, 220-258, 262-304, and 320-363; these read NLVSSVAALAFSPVHPHSLAVAHSATVSLFSSQSLSSSRR, SFRDVVSSVCFRSDGALFAACDLSGVVQVFDIKERMALRT, SHSA…VISD, GHKD…SNWI, NHGLPVEDVVYLPSGGLIATAGGNSVKVWDLIGGGKMVC, SHNK…VTYS, and GSTR…DESR. The Nuclear localization signal signature appears at 392–399; sequence EKKGLKLT.

As to expression, expressed in cells undergoing active cell divisions, including functional megaspores and the female gametophytic cells. Accumulates in roots, stems, leaves, inflorescences and siliques.

It localises to the nucleus. It is found in the nucleolus. Functionally, essential protein required for nuclear division and organization during embryo sac development in female gametophyte, probably by promoting rRNA biogenesis essential for the progression of the mitotic division cycles during gametogenesis. Involved in nucleolar processing of pre-18S ribosomal RNA. This is Protein SLOW WALKER 1 from Arabidopsis thaliana (Mouse-ear cress).